The primary structure comprises 1398 residues: MAP-homologous protein 1 (1398 aa).

An N-acetylmethionine modification is found at methionine 1. Positions 21–77 are disordered; the sequence is GWLVRPSASTSKSSRPGKSESKANSVAPDIQMDTARPPVFETSVDSSSSILSSNDKG. Polar residues predominate over residues 27–36; sequence SASTSKSSRP. Positions 63–73 are enriched in low complexity; the sequence is SVDSSSSILSS. A Phosphoserine modification is found at serine 81. 3 disordered regions span residues 90-144, 156-186, and 191-210; these read NQRA…APAP, HRKKDQEQQEKERERKERSPSPTHVDRGAAI, and TATISAESPPPLQYNAPPSY. Composition is skewed to polar residues over residues 91–102 and 114–123; these read QRANAGSTSVPT and VVETNLSNVE. Residues 159-186 are compositionally biased toward basic and acidic residues; the sequence is KDQEQQEKERERKERSPSPTHVDRGAAI. Lysine 221 is covalently cross-linked (Glycyl lysine isopeptide (Lys-Gly) (interchain with G-Cter in ubiquitin)). Threonine 222 bears the Phosphothreonine mark. 4 disordered regions span residues 244 to 270, 296 to 382, 395 to 428, and 515 to 548; these read HSPEEGKVDGTSPADDHNYGGSRPDPR, SSAS…PSSH, GNNNNNSTNASSLSANVNNPDTSSTSLWSSSSME, and NPEEDDANAKSKEEMAPQKQNEVEAHDEEDNNSQ. Phosphoserine is present on residues serine 309, serine 311, serine 354, and serine 357. Over residues 357–371 the composition is skewed to low complexity; the sequence is SIVDTVDSNSDVSSS. Residues 372 to 381 show a composition bias toward polar residues; the sequence is AQNNNQTPSS. A compositionally biased stretch (low complexity) spans 396–426; that stretch reads NNNNNSTNASSLSANVNNPDTSSTSLWSSSS. Basic and acidic residues predominate over residues 521–538; sequence ANAKSKEEMAPQKQNEVE. Phosphothreonine is present on threonine 577. Positions 605–615 are enriched in low complexity; it reads STSSLASMVSS. 3 disordered regions span residues 605-630, 1148-1169, and 1203-1223; these read STSSLASMVSSDTNGTNADDEGEILP, LKSPEAVSKSRKGGNQAQPNSE, and DAEDAVEFREGDDSNVNHEDV. The span at 1160-1169 shows a compositional bias: polar residues; sequence GGNQAQPNSE. Residues 1208 to 1223 are compositionally biased toward basic and acidic residues; it reads VEFREGDDSNVNHEDV. Positions 1227-1258 are tau/MAP repeat-like; the sequence is DQQFRDEVDIKNKYSIIKRELEHEKLVGGGDL. The disordered stretch occupies residues 1313-1372; sequence QEETAFRTKDEQQSSQSNDSSANASPTTDPISTGSNTSRTNDNAHIPPTDAPGFDKFMNN. Residues 1325-1337 are compositionally biased toward low complexity; sequence QSSQSNDSSANAS. The segment covering 1338–1355 has biased composition (polar residues); the sequence is PTTDPISTGSNTSRTNDN.

The protein resides in the cytoplasm. The protein localises to the cytoskeleton. It localises to the spindle. Its function is as follows. Essential for the formation and/or stabilization of microtubules. Binds to microtubules in vitro. The chain is MAP-homologous protein 1 (MHP1) from Saccharomyces cerevisiae (strain ATCC 204508 / S288c) (Baker's yeast).